A 643-amino-acid chain; its full sequence is Threonine--tRNA ligase (643 aa).

Positions 1 to 61 (MPIITLPDGS…EQDATLEIIT (61 aa)) constitute a TGS domain. Positions 243–534 (DHRKIGKALD…ITEEYAGFFP (292 aa)) are catalytic. Positions 334, 385, and 511 each coordinate Zn(2+).

This sequence belongs to the class-II aminoacyl-tRNA synthetase family. In terms of assembly, homodimer. Zn(2+) is required as a cofactor.

The protein localises to the cytoplasm. It carries out the reaction tRNA(Thr) + L-threonine + ATP = L-threonyl-tRNA(Thr) + AMP + diphosphate + H(+). In terms of biological role, catalyzes the attachment of threonine to tRNA(Thr) in a two-step reaction: L-threonine is first activated by ATP to form Thr-AMP and then transferred to the acceptor end of tRNA(Thr). Also edits incorrectly charged L-seryl-tRNA(Thr). The polypeptide is Threonine--tRNA ligase (Haemophilus influenzae (strain PittGG)).